The following is a 109-amino-acid chain: Large ribosomal subunit protein uL24 (109 aa).

Residues Met-1 to Lys-24 are disordered.

Belongs to the universal ribosomal protein uL24 family. As to quaternary structure, part of the 50S ribosomal subunit.

Its function is as follows. One of two assembly initiator proteins, it binds directly to the 5'-end of the 23S rRNA, where it nucleates assembly of the 50S subunit. In terms of biological role, one of the proteins that surrounds the polypeptide exit tunnel on the outside of the subunit. The polypeptide is Large ribosomal subunit protein uL24 (Koribacter versatilis (strain Ellin345)).